The sequence spans 722 residues: Homeobox-leucine zipper protein HDG11 (722 aa).

Positions 1–19 are enriched in gly residues; the sequence is MSFVVGVGGSGSGSGGDGG. Residues 1–42 form a disordered region; it reads MSFVVGVGGSGSGSGGDGGGSHHHDGSETDRKKKRYHRHTAQ. Basic and acidic residues predominate over residues 20–31; the sequence is GSHHHDGSETDR. The homeobox DNA-binding region spans 32-91; it reads KKKRYHRHTAQQIQRLESSFKECPHPDEKQRNQLSRELGLAPRQIKFWFQNRRTQLKAQH. The stretch at 81-161 forms a coiled coil; sequence QNRRTQLKAQ…LERMSTIASK (81 aa). Residues 227–460 enclose the START domain; that stretch reads SDMDKPIMTG…LQRMCERFAS (234 aa).

This sequence belongs to the HD-ZIP homeobox family. Class IV subfamily. In terms of assembly, interacts with BBM. In terms of tissue distribution, expressed in apical meristems and young epidermal tissue including trichomes and stipules. Expressed in lateral root tips, the L1 layer of apical inflorescence meristems and early flower primordia, carpel and petal epidermis, stigma papillae, ovule primordia, nucellus and embryo.

The protein localises to the nucleus. Its function is as follows. Transcription factor which acts as a positive regulator of drought stress tolerance. Can transactivate CIPK3, NCED3 and ERECTA. Transactivates several cell-wall-loosening protein genes by directly binding to HD motifs in their promoters. These target genes play important roles in coordinating cell-wall extensibility with root development and growth. Transactivates CYP74A/AOS, AOC3, OPR3 and 4CLL5/OPCL1 genes by directly binding to HD motifs in their promoters. These target genes are involved in jasmonate (JA) biosynthesis, and JA signaling affects root architecture by activating auxin signaling, which promotes lateral root formation. Acts as a negative regulator of trichome branching. Required for the establishment of giant cell identity on the abaxial side of sepals. Seems to promote cell differentiation. May regulate cell differentiation and proliferation during root and shoot meristem development. In Arabidopsis thaliana (Mouse-ear cress), this protein is Homeobox-leucine zipper protein HDG11.